A 347-amino-acid polypeptide reads, in one-letter code: 4-hydroxy-2-oxovalerate aldolase (347 aa).

Residues 11-262 enclose the Pyruvate carboxyltransferase domain; the sequence is PVVVDTTLRD…NPGLDVFKLL (252 aa). 19 to 20 serves as a coordination point for substrate; it reads RD. Mn(2+) is bound at residue Asp20. His23 functions as the Proton acceptor in the catalytic mechanism. Residues Ser173 and His201 each coordinate substrate. The Mn(2+) site is built by His201 and His203. Position 292 (Tyr292) interacts with substrate.

Belongs to the 4-hydroxy-2-oxovalerate aldolase family. As to quaternary structure, homodimer. Can also form a heterotetramer composed of two aldolase (TTHB246) and two dehydrogenase (TTHB247) subunits. Upon complex formation, the aldolase shows a 5-fold increase in substrate affinity, while the dehydrogenase shows a 3-fold decrease; the kcat values of each enzyme are reduced by 2-fold when they are in a complex. Requires Co(2+) as cofactor. The cofactor is Ni(2+). Mn(2+) serves as cofactor.

It catalyses the reaction (S)-4-hydroxy-2-oxopentanoate = acetaldehyde + pyruvate. It carries out the reaction (S)-4-hydroxy-2-oxohexanoate = propanal + pyruvate. Its activity is regulated as follows. Appears to be allosterically activated by NADH. Functionally, catalyzes the retro-aldol cleavage of both 4-hydroxy-2-oxopentanoate (HOPA) and 4-hydroxy-2-oxohexanoate (HOHA) to pyruvate and acetaldehyde or propanaldehyde, respectively. The aldehydes produced by this reaction are directly channeled to the dehydrogenase TTHB247, ensuring that these toxic aldehydes are sequestered from cellular components. Is involved in the meta-cleavage pathway for the degradation of aromatic compounds. Appears to be stereospecific since it can cleave (4S)-4-hydroxy-2-oxopentanoate but not the (4R) isomer. Is not able to catalyze the aldol addition of 2-oxobutyrate with acetaldehyde; this indicates that the enzyme is specific for pyruvate as the carbonyl donor. The protein is 4-hydroxy-2-oxovalerate aldolase of Thermus thermophilus (strain ATCC 27634 / DSM 579 / HB8).